We begin with the raw amino-acid sequence, 336 residues long: Glyceraldehyde-3-phosphate dehydrogenase (336 aa).

Residues 12–13 (RI), Asp34, Arg78, and Thr121 each bind NAD(+). D-glyceraldehyde 3-phosphate contacts are provided by residues 151-153 (SCT), Thr182, Arg199, 212-213 (TG), and Arg235. Cys152 serves as the catalytic Nucleophile. Asn316 is a binding site for NAD(+).

Belongs to the glyceraldehyde-3-phosphate dehydrogenase family. As to quaternary structure, homotetramer.

It localises to the cytoplasm. The catalysed reaction is D-glyceraldehyde 3-phosphate + phosphate + NAD(+) = (2R)-3-phospho-glyceroyl phosphate + NADH + H(+). It functions in the pathway carbohydrate degradation; glycolysis; pyruvate from D-glyceraldehyde 3-phosphate: step 1/5. In terms of biological role, catalyzes the oxidative phosphorylation of glyceraldehyde 3-phosphate (G3P) to 1,3-bisphosphoglycerate (BPG) using the cofactor NAD. The first reaction step involves the formation of a hemiacetal intermediate between G3P and a cysteine residue, and this hemiacetal intermediate is then oxidized to a thioester, with concomitant reduction of NAD to NADH. The reduced NADH is then exchanged with the second NAD, and the thioester is attacked by a nucleophilic inorganic phosphate to produce BPG. The chain is Glyceraldehyde-3-phosphate dehydrogenase (gap) from Streptococcus pyogenes serotype M3 (strain ATCC BAA-595 / MGAS315).